Consider the following 339-residue polypeptide: MRTVLVALLALVALTQAISPLDLIKEEWHTYKLQHRKNYANEVEERFRMKIFNENRHKIAKHNQLFAQGKVSYKLGLNKYADMLHHEFKETMNGYNHTLRQLMRERTGLVGATYIPPAHVTVPKSVDWREHGAVTGVKDQGHCGSCWAFSSTGALEGQHFRKAGVLVSLSEQNLVDCSTKYGNNGCNGGLMDNAFRYIKDNGGIDTEKSYPYEGIDDSCHFNKATIGATDTGFVDIPEGDEEKMKKAVATMGPVSVAIDASHESFQLYSEGVYNEPECDEQNLDHGVLVVGYGTDESGMDYWLVKNSWGTTWGEQGYIKMARNQNNQCGIATASSYPTV.

A signal peptide spans Met1–Ala17. Positions Ile18–Thr121 are cleaved as a propeptide — activation peptide. Asn96 carries N-linked (GlcNAc...) asparagine glycosylation. Cystine bridges form between Cys143–Cys186, Cys177–Cys219, and Cys278–Cys328. Cys146 is a catalytic residue. His285 is an active-site residue. Positions Asp295 to Gly298 are excised as a propeptide. The active site involves Asn306.

This sequence belongs to the peptidase C1 family. As to quaternary structure, dimer of a heavy and a light chain linked by disulfide bonds.

It localises to the lysosome. The enzyme catalyses Specificity close to that of papain. As compared to cathepsin B, cathepsin L exhibits higher activity toward protein substrates, but has little activity on Z-Arg-Arg-NHMec, and no peptidyl-dipeptidase activity.. Its function is as follows. Important for the overall degradation of proteins in lysosomes. Required for differentiation of imaginal disks. This Sarcophaga peregrina (Flesh fly) protein is Cathepsin L.